A 151-amino-acid chain; its full sequence is 1,4-dihydroxy-2-naphthoyl-CoA hydrolase (151 aa).

Aspartate 23 is a catalytic residue.

Belongs to the 4-hydroxybenzoyl-CoA thioesterase family. DHNA-CoA hydrolase subfamily.

It catalyses the reaction 1,4-dihydroxy-2-naphthoyl-CoA + H2O = 1,4-dihydroxy-2-naphthoate + CoA + H(+). Its pathway is cofactor biosynthesis; phylloquinone biosynthesis. It functions in the pathway quinol/quinone metabolism; 1,4-dihydroxy-2-naphthoate biosynthesis; 1,4-dihydroxy-2-naphthoate from chorismate: step 7/7. Catalyzes the hydrolysis of 1,4-dihydroxy-2-naphthoyl-CoA (DHNA-CoA) to 1,4-dihydroxy-2-naphthoate (DHNA), a reaction involved in phylloquinone (vitamin K1) biosynthesis. The protein is 1,4-dihydroxy-2-naphthoyl-CoA hydrolase of Prochlorococcus marinus (strain MIT 9211).